Consider the following 442-residue polypeptide: Cyclic AMP receptor-like protein B (442 aa).

The Extracellular segment spans residues 1-16 (MGGDIHLCSMILGKNH). A helical transmembrane segment spans residues 17-37 (LIFLYFANLFGSTLSFLATII). Residues 38 to 219 (TIVFYLVKKY…PKKIDTLIFY (182 aa)) are Cytoplasmic-facing. Residues 83–166 (YSSTPISIQN…LSSSDKNNTI (84 aa)) are disordered. Residues 91–103 (QNNNNKNNNLPKQ) are compositionally biased toward low complexity. The segment covering 112–122 (INKNHNNYCNY) has biased composition (polar residues). Residues 123–144 (STSATSSSSSSSSFSSTNSGSS) show a composition bias toward low complexity. The span at 145–166 (YEYQQPQKNQQTLSSSDKNNTI) shows a compositional bias: polar residues. Residues 220-240 (LSISDFIAVSGIIIEQLIIIF) form a helical membrane-spanning segment. Over 241 to 255 (NKEISKSIGFCIGER) the chain is Extracellular. The helical transmembrane segment at 256–276 (VSIHFGLLATLFWSNCIAYYL) threads the bilayer. At 277–289 (LRETYELKPYNIR) the chain is on the cytoplasmic side. Residues 290-310 (FVYFHIVCWGMALIGVASLFF) traverse the membrane as a helical segment. The Extracellular portion of the chain corresponds to 311-334 (SKIITVSNIDQGGSWCSVSSSYQL). A helical membrane pass occupies residues 335–355 (YFWVIPLFVSFTWNLICYCLI). The Cytoplasmic segment spans residues 356–382 (YRKFNKIIGIYGIQSVQIKTIIIRKLS). Residues 383–403 (FYLLAFLITWVWDVINNSIFL) traverse the membrane as a helical segment. Residues 404–410 (YEGKCPP) are Extracellular-facing. The helical transmembrane segment at 411–431 (FALWILQEFFSSGYGFFNSLA) threads the bilayer. At 432-442 (YAVTTRFYSRK) the chain is on the cytoplasmic side.

It belongs to the G-protein coupled receptor 5 family.

The protein resides in the membrane. Its function is as follows. Receptor for cAMP. In Dictyostelium discoideum (Social amoeba), this protein is Cyclic AMP receptor-like protein B (crlB).